A 190-amino-acid chain; its full sequence is Imidazoleglycerol-phosphate dehydratase (190 aa).

This sequence belongs to the imidazoleglycerol-phosphate dehydratase family.

It is found in the cytoplasm. It catalyses the reaction D-erythro-1-(imidazol-4-yl)glycerol 3-phosphate = 3-(imidazol-4-yl)-2-oxopropyl phosphate + H2O. Its pathway is amino-acid biosynthesis; L-histidine biosynthesis; L-histidine from 5-phospho-alpha-D-ribose 1-diphosphate: step 6/9. This chain is Imidazoleglycerol-phosphate dehydratase, found in Campylobacter hominis (strain ATCC BAA-381 / DSM 21671 / CCUG 45161 / LMG 19568 / NCTC 13146 / CH001A).